We begin with the raw amino-acid sequence, 285 residues long: Bifunctional protein FolD (285 aa).

Residues 166-168 (GAS) and Ile232 contribute to the NADP(+) site.

Belongs to the tetrahydrofolate dehydrogenase/cyclohydrolase family. As to quaternary structure, homodimer.

The enzyme catalyses (6R)-5,10-methylene-5,6,7,8-tetrahydrofolate + NADP(+) = (6R)-5,10-methenyltetrahydrofolate + NADPH. The catalysed reaction is (6R)-5,10-methenyltetrahydrofolate + H2O = (6R)-10-formyltetrahydrofolate + H(+). Its pathway is one-carbon metabolism; tetrahydrofolate interconversion. Its function is as follows. Catalyzes the oxidation of 5,10-methylenetetrahydrofolate to 5,10-methenyltetrahydrofolate and then the hydrolysis of 5,10-methenyltetrahydrofolate to 10-formyltetrahydrofolate. The sequence is that of Bifunctional protein FolD from Baumannia cicadellinicola subsp. Homalodisca coagulata.